A 576-amino-acid polypeptide reads, in one-letter code: Proline--tRNA ligase (576 aa).

This sequence belongs to the class-II aminoacyl-tRNA synthetase family. ProS type 1 subfamily. Homodimer.

The protein resides in the cytoplasm. It catalyses the reaction tRNA(Pro) + L-proline + ATP = L-prolyl-tRNA(Pro) + AMP + diphosphate. Functionally, catalyzes the attachment of proline to tRNA(Pro) in a two-step reaction: proline is first activated by ATP to form Pro-AMP and then transferred to the acceptor end of tRNA(Pro). As ProRS can inadvertently accommodate and process non-cognate amino acids such as alanine and cysteine, to avoid such errors it has two additional distinct editing activities against alanine. One activity is designated as 'pretransfer' editing and involves the tRNA(Pro)-independent hydrolysis of activated Ala-AMP. The other activity is designated 'posttransfer' editing and involves deacylation of mischarged Ala-tRNA(Pro). The misacylated Cys-tRNA(Pro) is not edited by ProRS. The protein is Proline--tRNA ligase of Bordetella bronchiseptica (strain ATCC BAA-588 / NCTC 13252 / RB50) (Alcaligenes bronchisepticus).